A 487-amino-acid chain; its full sequence is 1-aminocyclopropane-1-carboxylate synthase 1 (487 aa).

Lysine 286 carries the post-translational modification N6-(pyridoxal phosphate)lysine.

This sequence belongs to the class-I pyridoxal-phosphate-dependent aminotransferase family. In terms of assembly, homodimer. The cofactor is pyridoxal 5'-phosphate.

The enzyme catalyses S-adenosyl-L-methionine = 1-aminocyclopropane-1-carboxylate + S-methyl-5'-thioadenosine + H(+). The protein operates within alkene biosynthesis; ethylene biosynthesis via S-adenosyl-L-methionine; ethylene from S-adenosyl-L-methionine: step 1/2. Catalyzes the formation of 1-aminocyclopropane-1-carboxylate, a direct precursor of ethylene in higher plants. This is 1-aminocyclopropane-1-carboxylate synthase 1 (ACC1) from Oryza sativa subsp. indica (Rice).